The chain runs to 85 residues: DAKALAGIADAKLKHTETGDKSAPVIENVEIKKGDRNELLSGIKEGKELKKAETNDRSAPVIPADAKVQEDNRGALLADIQATAK.

The 18-residue stretch at 35–52 folds into the WH2 domain; the sequence is DRNELLSGIKEGKELKKA.

Its function is as follows. Is able to bind two actin monomers at high concentrations of G-actin. The protein is Actobindin homolog of Entamoeba histolytica.